The primary structure comprises 224 residues: Lipoprotein-releasing system ATP-binding protein LolD (224 aa).

The ABC transporter domain maps to 5–224 (LEILDVSKCY…SLSGGMLTEL (220 aa)). 40–47 (GSSGSGKS) lines the ATP pocket.

Belongs to the ABC transporter superfamily. Lipoprotein translocase (TC 3.A.1.125) family. In terms of assembly, the complex is composed of two ATP-binding proteins (LolD) and two transmembrane proteins (LolC and LolE).

The protein resides in the cell inner membrane. Functionally, part of the ABC transporter complex LolCDE involved in the translocation of mature outer membrane-directed lipoproteins, from the inner membrane to the periplasmic chaperone, LolA. Responsible for the formation of the LolA-lipoprotein complex in an ATP-dependent manner. The sequence is that of Lipoprotein-releasing system ATP-binding protein LolD from Anaplasma marginale (strain St. Maries).